Consider the following 261-residue polypeptide: Adenosylcobinamide-GDP ribazoletransferase (261 aa).

A run of 7 helical transmembrane segments spans residues 4 to 26, 40 to 60, 62 to 82, 110 to 130, 140 to 160, 197 to 217, and 237 to 257; these read GLNG…QIPW, LTGL…SPFL, PLVL…GLHL, VGAF…LLLM, FTWL…VQLI, CFLL…IWLF, and IGAS…TFFL.

The protein belongs to the CobS family. Mg(2+) is required as a cofactor.

It is found in the cell membrane. It carries out the reaction alpha-ribazole + adenosylcob(III)inamide-GDP = adenosylcob(III)alamin + GMP + H(+). The catalysed reaction is alpha-ribazole 5'-phosphate + adenosylcob(III)inamide-GDP = adenosylcob(III)alamin 5'-phosphate + GMP + H(+). It functions in the pathway cofactor biosynthesis; adenosylcobalamin biosynthesis; adenosylcobalamin from cob(II)yrinate a,c-diamide: step 7/7. In terms of biological role, joins adenosylcobinamide-GDP and alpha-ribazole to generate adenosylcobalamin (Ado-cobalamin). Also synthesizes adenosylcobalamin 5'-phosphate from adenosylcobinamide-GDP and alpha-ribazole 5'-phosphate. This is Adenosylcobinamide-GDP ribazoletransferase from Halalkalibacterium halodurans (strain ATCC BAA-125 / DSM 18197 / FERM 7344 / JCM 9153 / C-125) (Bacillus halodurans).